Consider the following 1700-residue polypeptide: Balbiani ring protein 3 (1700 aa).

An N-terminal signal peptide occupies residues 1–20 (MKTLSSLLLVLAVNVLLIQA).

As to expression, salivary gland.

The protein resides in the secreted. Its function is as follows. Used by the larvae to construct a supramolecular structure, the larval tube. Balbiani ring protein 3 could play a role as a transport protein that binds to other proteins intracellularly and in the gland lumen in order to prevent these from forming water-insoluble fibers too early. The protein is Balbiani ring protein 3 (BR3) of Chironomus tentans (Midge).